Consider the following 172-residue polypeptide: NAD(P)H-quinone oxidoreductase subunit J (172 aa).

Belongs to the complex I 30 kDa subunit family. NDH-1 can be composed of about 15 different subunits; different subcomplexes with different compositions have been identified which probably have different functions.

The protein localises to the cellular thylakoid membrane. The enzyme catalyses a plastoquinone + NADH + (n+1) H(+)(in) = a plastoquinol + NAD(+) + n H(+)(out). It catalyses the reaction a plastoquinone + NADPH + (n+1) H(+)(in) = a plastoquinol + NADP(+) + n H(+)(out). Its function is as follows. NDH-1 shuttles electrons from an unknown electron donor, via FMN and iron-sulfur (Fe-S) centers, to quinones in the respiratory and/or the photosynthetic chain. The immediate electron acceptor for the enzyme in this species is believed to be plastoquinone. Couples the redox reaction to proton translocation, and thus conserves the redox energy in a proton gradient. Cyanobacterial NDH-1 also plays a role in inorganic carbon-concentration. The sequence is that of NAD(P)H-quinone oxidoreductase subunit J from Synechococcus elongatus (strain ATCC 33912 / PCC 7942 / FACHB-805) (Anacystis nidulans R2).